We begin with the raw amino-acid sequence, 361 residues long: Probable dual-specificity RNA methyltransferase RlmN (361 aa).

Glu91 (proton acceptor) is an active-site residue. Residues 97–329 (QHYGLSVCVT…KKKGGNCVVR (233 aa)) form the Radical SAM core domain. An intrachain disulfide couples Cys104 to Cys340. Cys111, Cys115, and Cys118 together coordinate [4Fe-4S] cluster. S-adenosyl-L-methionine contacts are provided by residues 163 to 164 (GE), Ser195, 218 to 220 (SLH), and Asn296. The active-site S-methylcysteine intermediate is Cys340.

It belongs to the radical SAM superfamily. RlmN family. Requires [4Fe-4S] cluster as cofactor.

It localises to the cytoplasm. The enzyme catalyses adenosine(2503) in 23S rRNA + 2 reduced [2Fe-2S]-[ferredoxin] + 2 S-adenosyl-L-methionine = 2-methyladenosine(2503) in 23S rRNA + 5'-deoxyadenosine + L-methionine + 2 oxidized [2Fe-2S]-[ferredoxin] + S-adenosyl-L-homocysteine. It catalyses the reaction adenosine(37) in tRNA + 2 reduced [2Fe-2S]-[ferredoxin] + 2 S-adenosyl-L-methionine = 2-methyladenosine(37) in tRNA + 5'-deoxyadenosine + L-methionine + 2 oxidized [2Fe-2S]-[ferredoxin] + S-adenosyl-L-homocysteine. In terms of biological role, specifically methylates position 2 of adenine 2503 in 23S rRNA and position 2 of adenine 37 in tRNAs. The chain is Probable dual-specificity RNA methyltransferase RlmN from Streptococcus pneumoniae (strain Hungary19A-6).